A 310-amino-acid chain; its full sequence is Ribosomal protein uL3 glutamine methyltransferase (310 aa).

The protein belongs to the protein N5-glutamine methyltransferase family. PrmB subfamily.

It catalyses the reaction L-glutaminyl-[ribosomal protein uL3] + S-adenosyl-L-methionine = N(5)-methyl-L-glutaminyl-[ribosomal protein uL3] + S-adenosyl-L-homocysteine + H(+). Functionally, specifically methylates large ribosomal subunit protein uL3 on 'Gln-150'. The protein is Ribosomal protein uL3 glutamine methyltransferase of Shigella dysenteriae serotype 1 (strain Sd197).